Consider the following 119-residue polypeptide: Large ribosomal subunit protein uL24 (119 aa).

The protein belongs to the universal ribosomal protein uL24 family. Part of the 50S ribosomal subunit.

Functionally, one of two assembly initiator proteins, it binds directly to the 5'-end of the 23S rRNA, where it nucleates assembly of the 50S subunit. Its function is as follows. Located at the polypeptide exit tunnel on the outside of the subunit. This Methanococcus maripaludis (strain DSM 14266 / JCM 13030 / NBRC 101832 / S2 / LL) protein is Large ribosomal subunit protein uL24.